A 570-amino-acid chain; its full sequence is Structure-specific endonuclease subunit EME1 (570 aa).

Positions 1 to 12 are enriched in low complexity; that stretch reads MALKKSSPSLDS. Residues 1-42 form a disordered region; the sequence is MALKKSSPSLDSGDSDSEELPTFAFLKKEPSSTKRRQPEREE. 2 positions are modified to phosphoserine: S12 and S15. Positions 26-42 are enriched in basic and acidic residues; that stretch reads LKKEPSSTKRRQPEREE. Residues S84, S85, and S87 each carry the phosphoserine modification. K103 participates in a covalent cross-link: Glycyl lysine isopeptide (Lys-Gly) (interchain with G-Cter in SUMO2). A phosphoserine mark is found at S111 and S117. Glycyl lysine isopeptide (Lys-Gly) (interchain with G-Cter in SUMO2) cross-links involve residues K136 and K141. T150 is modified (phosphothreonine). 2 disordered regions span residues 187-233 and 372-400; these read KTNS…ERKN and AQNP…ASIG. Residues 220 to 233 show a composition bias toward basic and acidic residues; it reads RQKESTLRRQERKN. The interval 250 to 456 is nuclease-like domain; forms the post-nick DNA binding interface and is involved in DNA recognition and bending; that stretch reads KHIIVVLDPV…PFKKLRDETT (207 aa). Positions 476 to 570 are helix-hairpin-helix (2HhH); forms the pre-nick DNA binding interface and is involved in DNA recognition and bending; that stretch reads RGLALVWRRQ…QPHLSLDSAD (95 aa).

It belongs to the EME1/MMS4 family. As to quaternary structure, part of the heterodimeric MUS81-EME1 complex.

Its subcellular location is the nucleus. It localises to the nucleolus. Its function is as follows. Non-catalytic subunit of the structure-specific, heterodimeric DNA endonuclease MUS81-EME1 which is involved in the maintenance of genome stability. In the complex, EME1 is required for DNA cleavage, participating in DNA recognition and bending. MUS81-EME1 cleaves 3'-flaps and nicked Holliday junctions, and exhibit limited endonuclease activity with 5' flaps and nicked double-stranded DNAs. Active during prometaphase, MUS81-EME1 resolves mitotic recombination intermediates, including Holliday junctions, which form during homologous recombination. The chain is Structure-specific endonuclease subunit EME1 from Homo sapiens (Human).